A 118-amino-acid polypeptide reads, in one-letter code: Protein MGF 110-6L (118 aa).

The signal sequence occupies residues 1–18 (MLVIFLGILGLLASQVSS). Asn96 carries an N-linked (GlcNAc...) asparagine; by host glycan. A Prevents secretion from ER motif is present at residues 115-118 (KDEL).

The protein belongs to the asfivirus MGF 110 family. N-glycosylated.

Its subcellular location is the host endoplasmic reticulum lumen. Its function is as follows. Plays a role in virus cell tropism, and may be required for efficient virus replication in macrophages. The polypeptide is Protein MGF 110-6L (African swine fever virus (isolate Tick/South Africa/Pretoriuskop Pr4/1996) (ASFV)).